Here is a 174-residue protein sequence, read N- to C-terminus: Translationally-controlled tumor protein homolog 1 (174 aa).

The region spanning 1-174 (MRVFKDIVGY…FKDGLESVKY (174 aa)) is the TCTP domain.

It belongs to the TCTP family.

The protein resides in the cytoplasm. Involved in calcium binding and microtubule stabilization. This is Translationally-controlled tumor protein homolog 1 from Dictyostelium discoideum (Social amoeba).